The sequence spans 570 residues: Multidrug and toxin extrusion protein 1 (570 aa).

Position 1 is an N-acetylmethionine (M1). The Cytoplasmic segment spans residues 1–37; that stretch reads MEAPEEPAPVRGGPEATLEVRGSRCLRLSAFREELRA. A helical transmembrane segment spans residues 38–58; sequence LLVLAGPAFLVQLMVFLISFI. At 59–72 the chain is on the extracellular side; sequence SSVFCGHLGKLELD. A helical membrane pass occupies residues 73 to 93; sequence AVTLAIAVINVTGVSVGFGLS. The Cytoplasmic portion of the chain corresponds to 94–123; sequence SACDTLISQTYGSQNLKHVGVILQRSALVL. Residues 124–144 traverse the membrane as a helical segment; that stretch reads LLCCFPCWALFLNTQHILLLF. The Extracellular portion of the chain corresponds to 145–152; sequence RQDPDVSR. Residues 153-173 traverse the membrane as a helical segment; sequence LTQTYVTIFIPALPATFLYML. The Cytoplasmic segment spans residues 174–176; it reads QVK. Residues 177–197 form a helical membrane-spanning segment; it reads YLLNQGIVLPQIVTGVAANLV. Residues 198 to 216 are Extracellular-facing; that stretch reads NALANYLFLHQLHLGVIGS. Residues 217-237 form a helical membrane-spanning segment; it reads ALANLISQYTLALLLFLYILG. Residues 238 to 256 lie on the Cytoplasmic side of the membrane; that stretch reads KKLHQATWGGWSLECLQDW. A helical membrane pass occupies residues 257-276; it reads ASFLRLAIPSMLMLCMEWWA. Residues 277 to 295 lie on the Extracellular side of the membrane; that stretch reads YEVGSFLSGILGMVELGAQ. A helical membrane pass occupies residues 296 to 316; sequence SIVYELAIIVYMVPAGFSVAA. The Cytoplasmic portion of the chain corresponds to 317-336; that stretch reads SVRVGNALGAGDMEQARKSS. The chain crosses the membrane as a helical span at residues 337–357; that stretch reads TVSLLITVLFAVAFSVLLLSC. Residues 358–370 lie on the Extracellular side of the membrane; the sequence is KDHVGYIFTTDRD. Residues 371 to 391 form a helical membrane-spanning segment; it reads IINLVAQVVPIYAVSHLFEAL. Residues 392-408 are Cytoplasmic-facing; it reads ACTSGGVLRGSGNQKVG. The chain crosses the membrane as a helical span at residues 409–429; it reads AIVNTIGYYVVGLPIGIALMF. Residues 430–437 are Extracellular-facing; sequence ATTLGVMG. The chain crosses the membrane as a helical span at residues 438–458; that stretch reads LWSGIIICTVFQAVCFLGFII. Over 459 to 546 the chain is Cytoplasmic; sequence QLNWKKACQQ…LSRKQLVLRR (88 aa). The segment at 508–534 is disordered; the sequence is DVGKTGEPQSDQQMRQEEPLPEHPQDG. A compositionally biased stretch (basic and acidic residues) spans 521-533; sequence MRQEEPLPEHPQD. The chain crosses the membrane as a helical span at residues 547 to 567; sequence GLLLLGVFLILLVGILVRFYV. Over 568–570 the chain is Extracellular; that stretch reads RIQ.

It belongs to the multi antimicrobial extrusion (MATE) (TC 2.A.66.1) family. As to expression, widely expressed. The highest expression is found in adrenal gland, and to a lower extent in liver, skeletal muscle and kidney. In testis, primarily localized throughout the adluminal compartment of the seminiferous tubules with expression at the peritubular myoid cells and Leydig cells.

Its subcellular location is the cell membrane. The protein localises to the apical cell membrane. It catalyses the reaction thiamine(out) + H(+)(in) = thiamine(in) + H(+)(out). The enzyme catalyses estrone 3-sulfate(in) + H(+)(out) = estrone 3-sulfate(out) + H(+)(in). The catalysed reaction is creatinine(in) + H(+)(out) = creatinine(out) + H(+)(in). It carries out the reaction agmatine(in) + H(+)(out) = agmatine(out) + H(+)(in). In terms of biological role, multidrug efflux pump that functions as a H(+)/organic cation antiporter. Plays a physiological role in the excretion of cationic compounds including endogenous metabolites, drugs, toxins through the kidney and liver, into urine and bile respectively. Mediates the efflux of endogenous compounds such as creatinine, vitamin B1/thiamine, agmatine and estrone-3-sulfate. May also contribute to regulate the transport of cationic compounds in testis across the blood-testis-barrier. This is Multidrug and toxin extrusion protein 1 from Homo sapiens (Human).